The chain runs to 134 residues: Syncollin (134 aa).

Positions 1 to 21 are cleaved as a signal peptide; it reads MSPLRPLLLALALASVPCAQG.

Monomer and homooligomer; most probably hexameric. Interacts with GP2. Post-translationally, contains intrachain disulfide bonds.

The protein localises to the zymogen granule membrane. It is found in the zymogen granule lumen. Functions in exocytosis in pancreatic acinar cells regulating the fusion of zymogen granules with each other. May have a pore-forming activity on membranes and regulate exocytosis in other exocrine tissues. The chain is Syncollin (SYCN) from Homo sapiens (Human).